Consider the following 91-residue polypeptide: MPRSLKKGPFVDHHLLGKVEDAVEAGSRKPIKTWSRRSMIIPEMVGLTIAVYNGKQHVPVMVSEHMVGHKLGEFALTRNYRGHAVDKKAKR.

The protein belongs to the universal ribosomal protein uS19 family.

Its function is as follows. Protein S19 forms a complex with S13 that binds strongly to the 16S ribosomal RNA. This Alcanivorax borkumensis (strain ATCC 700651 / DSM 11573 / NCIMB 13689 / SK2) protein is Small ribosomal subunit protein uS19.